A 1726-amino-acid chain; its full sequence is Transcription elongation factor SPT6 (1726 aa).

Acidic residues-rich tracts occupy residues 1–18, 31–45, and 55–79; these read MSDF…EFEE, EEDE…EDQD, and DDDD…SDSG. Disordered regions lie at residues 1–196, 219–248, and 482–512; these read MSDF…KGKK, AEFD…KKQT, and EVSE…QASR. Phosphoserine is present on S90. Acidic residues predominate over residues 93-104; the sequence is DYLDDDDLDLIE. Residues 110-120 are compositionally biased toward basic residues; it reads KVKRRKKKYSR. Acidic residues-rich tracts occupy residues 146–157, 166–186, 219–240, and 484–501; these read GDGEGEVEDGEA, DEEE…DDDG, AEFD…DDES, and SEED…EEEE. Basic and acidic residues predominate over residues 502–512; it reads QKGPDLKQASR. Positions 806–865 form a coiled coil; the sequence is LKRRNAWREDEREKKQQDVENLKKFLLSKKPHVVAVSGENRDAHMVMEDIKRTISELEQN. The S1 motif domain maps to 1204–1273; sequence WNHFDSGSCP…EKFNVDLTCR (70 aa). In terms of domain architecture, SH2 spans 1316 to 1426; it reads YIKRVIAHPS…LLGHKYFHEC (111 aa). Residue T1522 is modified to Phosphothreonine. At S1525 the chain carries Phosphoserine. Residues 1611–1627 show a composition bias toward polar residues; that stretch reads LMTPSYSYTTPGQQQAM. Residues 1611–1726 form a disordered region; that stretch reads LMTPSYSYTT…ATPLLDEMDR (116 aa). Composition is skewed to low complexity over residues 1628–1640 and 1647–1656; these read TTPQ…PQSS and SSSTPSSSSS. Over residues 1657 to 1669 the composition is skewed to polar residues; that stretch reads RVRTPQPKASSHT.

Belongs to the SPT6 family.

The protein resides in the nucleus. In terms of biological role, histone H3-H4 chaperone that plays a role in maintenance of chromatin structure during RNA polymerase II transcription elongation. Promotes the activation of the myogenic gene program by entailing erasure of the repressive H3K27me3 epigenetic mark through stabilization of the chromatin interaction of the H3K27 demethylase KDM6A. Plays an important role during early patterning and somitogenesis of the embryo. The polypeptide is Transcription elongation factor SPT6 (supt6h) (Danio rerio (Zebrafish)).